Consider the following 99-residue polypeptide: Aspartyl/glutamyl-tRNA(Asn/Gln) amidotransferase subunit C (99 aa).

This sequence belongs to the GatC family. Heterotrimer of A, B and C subunits.

It carries out the reaction L-glutamyl-tRNA(Gln) + L-glutamine + ATP + H2O = L-glutaminyl-tRNA(Gln) + L-glutamate + ADP + phosphate + H(+). The enzyme catalyses L-aspartyl-tRNA(Asn) + L-glutamine + ATP + H2O = L-asparaginyl-tRNA(Asn) + L-glutamate + ADP + phosphate + 2 H(+). In terms of biological role, allows the formation of correctly charged Asn-tRNA(Asn) or Gln-tRNA(Gln) through the transamidation of misacylated Asp-tRNA(Asn) or Glu-tRNA(Gln) in organisms which lack either or both of asparaginyl-tRNA or glutaminyl-tRNA synthetases. The reaction takes place in the presence of glutamine and ATP through an activated phospho-Asp-tRNA(Asn) or phospho-Glu-tRNA(Gln). The protein is Aspartyl/glutamyl-tRNA(Asn/Gln) amidotransferase subunit C of Paraburkholderia xenovorans (strain LB400).